The primary structure comprises 473 residues: MAACVGSRTLSKDDVNYRLHFRMINEQQVEDITLEFFYRPHTITLLSFTILSLMAFAFTRDDSVPEENIWRGILSVIFFFLIISVLAFPNGPFTRPHPAIWRMVFGLSVLYFLFLVFVLFLNFEQVKAVMYWLDPNLRYATREADIMEYAVNCHVITWERILSHFDIFAFGHFWGWAMKALLIRSYGLCWTISITWELTELFFMHLLPNFAECWWDQVILDILLCNGGGIWLGMVVCRFLEMRTYHWASFKDIHTTTGKIKRAVLQFTPASWTYVRWFDPKSSFQRVAGIYLFMIIWQLTELNTFFLKHIFVFQASHPLSWGRILFIGIITAPTVRQYYAYLTDTQCKRVGTQCWVFGVIAFLEAIVCIKFGQDLFSKTQILYVVFWLLCVAFTTFLCLYGMVWYAEYYGHREKTLSESEDSPYSPDASWLHSKFSKGADNSPPKHPVNSESHSSRRRNRHSRSKVTNGIGKK.

At 1–35 (MAACVGSRTLSKDDVNYRLHFRMINEQQVEDITLE) the chain is on the cytoplasmic side. A helical membrane pass occupies residues 36-56 (FFYRPHTITLLSFTILSLMAF). The Lumenal portion of the chain corresponds to 57 to 72 (AFTRDDSVPEENIWRG). A helical transmembrane segment spans residues 73-93 (ILSVIFFFLIISVLAFPNGPF). Topologically, residues 94–102 (TRPHPAIWR) are cytoplasmic. Residues 103–123 (MVFGLSVLYFLFLVFVLFLNF) traverse the membrane as a helical segment. Residues 124 to 186 (EQVKAVMYWL…AMKALLIRSY (63 aa)) are Lumenal-facing. A helical transmembrane segment spans residues 187–207 (GLCWTISITWELTELFFMHLL). At 208–216 (PNFAECWWD) the chain is on the cytoplasmic side. Residues 217 to 237 (QVILDILLCNGGGIWLGMVVC) traverse the membrane as a helical segment. The Lumenal portion of the chain corresponds to 238–286 (RFLEMRTYHWASFKDIHTTTGKIKRAVLQFTPASWTYVRWFDPKSSFQR). The helical transmembrane segment at 287–307 (VAGIYLFMIIWQLTELNTFFL) threads the bilayer. Topologically, residues 308–319 (KHIFVFQASHPL) are cytoplasmic. The chain crosses the membrane as a helical span at residues 320–342 (SWGRILFIGIITAPTVRQYYAYL). Topologically, residues 343 to 355 (TDTQCKRVGTQCW) are lumenal. The helical transmembrane segment at 356 to 376 (VFGVIAFLEAIVCIKFGQDLF) threads the bilayer. The Cytoplasmic segment spans residues 377–380 (SKTQ). A helical transmembrane segment spans residues 381–401 (ILYVVFWLLCVAFTTFLCLYG). Residues 402-473 (MVWYAEYYGH…SKVTNGIGKK (72 aa)) are Lumenal-facing. The disordered stretch occupies residues 420-473 (EDSPYSPDASWLHSKFSKGADNSPPKHPVNSESHSSRRRNRHSRSKVTNGIGKK). The span at 455 to 464 (SRRRNRHSRS) shows a compositional bias: basic residues.

This sequence belongs to the phosphatidyl serine synthase family.

It is found in the endoplasmic reticulum membrane. It carries out the reaction a 1,2-diacyl-sn-glycero-3-phosphoethanolamine + L-serine = a 1,2-diacyl-sn-glycero-3-phospho-L-serine + ethanolamine. The catalysed reaction is a 1,2-diacyl-sn-glycero-3-phosphocholine + L-serine = a 1,2-diacyl-sn-glycero-3-phospho-L-serine + choline. Its pathway is phospholipid metabolism; phosphatidylserine biosynthesis. In terms of biological role, catalyzes a base-exchange reaction in which the polar head group of phosphatidylethanolamine (PE) or phosphatidylcholine (PC) is replaced by L-serine. Catalyzes mainly the conversion of phosphatidylcholine but also converts, in vitro and to a lesser extent, phosphatidylethanolamine. This chain is Phosphatidylserine synthase 1 (PTDSS1), found in Gallus gallus (Chicken).